We begin with the raw amino-acid sequence, 61 residues long: Conotoxin Vn5.3 (61 aa).

The N-terminal stretch at 1 to 19 is a signal peptide; the sequence is MRCLPVFVILLLLIASAPG. The propeptide occupies 20–50; sequence VDVQPKTKYYVPRASRRDFAKKTPKRLSKLR.

This sequence belongs to the conotoxin T superfamily. Post-translationally, contains 2 disulfide bonds that can be either 'C1-C3, C2-C4' or 'C1-C4, C2-C3', since these disulfide connectivities have been observed for conotoxins with cysteine framework V (for examples, see AC P0DQQ7 and AC P81755). As to expression, expressed by the venom duct.

It localises to the secreted. The chain is Conotoxin Vn5.3 from Conus ventricosus (Mediterranean cone).